A 432-amino-acid chain; its full sequence is Serine hydroxymethyltransferase 1 (432 aa).

(6S)-5,6,7,8-tetrahydrofolate-binding positions include Leu-131 and 135–137 (GHL). Lys-240 is subject to N6-(pyridoxal phosphate)lysine.

It belongs to the SHMT family. As to quaternary structure, homodimer. Pyridoxal 5'-phosphate is required as a cofactor.

It localises to the cytoplasm. It carries out the reaction (6R)-5,10-methylene-5,6,7,8-tetrahydrofolate + glycine + H2O = (6S)-5,6,7,8-tetrahydrofolate + L-serine. It functions in the pathway one-carbon metabolism; tetrahydrofolate interconversion. Its pathway is amino-acid biosynthesis; glycine biosynthesis; glycine from L-serine: step 1/1. Its function is as follows. Catalyzes the reversible interconversion of serine and glycine with tetrahydrofolate (THF) serving as the one-carbon carrier. This reaction serves as the major source of one-carbon groups required for the biosynthesis of purines, thymidylate, methionine, and other important biomolecules. Also exhibits THF-independent aldolase activity toward beta-hydroxyamino acids, producing glycine and aldehydes, via a retro-aldol mechanism. This is Serine hydroxymethyltransferase 1 from Rhodopseudomonas palustris (strain ATCC BAA-98 / CGA009).